We begin with the raw amino-acid sequence, 356 residues long: 16-methoxy-2,3-dihydro-3-hydroxytabersonine synthase (356 aa).

Zn(2+) is bound by residues C49, H71, C102, C105, C108, C116, and C162. NAD(+) is bound at residue 187-192; sequence GLGAVG.

Belongs to the zinc-containing alcohol dehydrogenase family. Zn(2+) is required as a cofactor. As to expression, expressed in leaf epidermis.

It carries out the reaction (3R)-3-hydroxy-16-methoxy-2,3-dihydrotabersonine + A = (3R)-1,2-didehydro-3-hydroxy-16-methoxy-2,3-dihydrotabersonine + AH2. The enzyme catalyses (3R)-3-hydroxy-2,3-dihydrotabersonine + A = (3R)-1,2-didehydro-3-hydroxy-2,3-dihydrotabersonine + AH2. It participates in alkaloid biosynthesis; vindoline biosynthesis. Its function is as follows. Converts the unstable imine alcohols produced by CYP71D1V2/T3O into 3-hydroxy-16-methoxy-2,3-dihydrotabersonine or 3-hydroxy-2,3-dihydrotabersonine. The chain is 16-methoxy-2,3-dihydro-3-hydroxytabersonine synthase from Catharanthus roseus (Madagascar periwinkle).